A 209-amino-acid chain; its full sequence is Uracil phosphoribosyltransferase (209 aa).

5-phospho-alpha-D-ribose 1-diphosphate-binding positions include arginine 79, arginine 104, and 131-139 (DPMLATGGS). Uracil contacts are provided by residues isoleucine 194 and 199–201 (GDA). Residue aspartate 200 coordinates 5-phospho-alpha-D-ribose 1-diphosphate.

Belongs to the UPRTase family. Requires Mg(2+) as cofactor.

It carries out the reaction UMP + diphosphate = 5-phospho-alpha-D-ribose 1-diphosphate + uracil. It participates in pyrimidine metabolism; UMP biosynthesis via salvage pathway; UMP from uracil: step 1/1. Its activity is regulated as follows. Allosterically activated by GTP. Its function is as follows. Catalyzes the conversion of uracil and 5-phospho-alpha-D-ribose 1-diphosphate (PRPP) to UMP and diphosphate. This chain is Uracil phosphoribosyltransferase, found in Clostridium novyi (strain NT).